A 68-amino-acid chain; its full sequence is Venom peptide 3 (68 aa).

An N-terminal signal peptide occupies residues 1-25 (MTKQSIVIVLFAAIAMMACLQRVTA). 5 AXPX repeats span residues 25–28 (AEPA), 33–36 (AAPI), 37–40 (AEPY), 41–44 (ANPE), and 47–50 (ASPE). A propeptide spanning residues 26–51 (EPAPEPIAAPIAEPYANPEAIASPEA) is cleaved from the precursor. Position 65 is a leucine amide (leucine 65).

Expressed by the venom gland.

Its subcellular location is the secreted. It is found in the target cell membrane. In terms of biological role, antimicrobial peptide with strong activity against the fungi B.cinerea (MIC=5 uM) and C.albicans (MIC=33 uM), and no activity against the Gram-negative bacterium E.coli (MIC&gt;200 uM) and the Gram-positive bacterium S.aureus (MIC&gt;200 uM). Shows cytolytic activity against insect cell lines. Has no hemolytic activity against human erythrocytes. In vivo, peptide injection in the vicinity of the head and thorax of lepidopteran larvae induces feeding disorder that lasts one or two days before recovering. This chain is Venom peptide 3, found in Orancistrocerus drewseni (Solitary wasp).